The sequence spans 398 residues: S-adenosylmethionine synthase (398 aa).

Histidine 16 lines the ATP pocket. Aspartate 18 lines the Mg(2+) pocket. Residue glutamate 51 participates in K(+) binding. 2 residues coordinate L-methionine: glutamate 64 and glutamine 108. The segment at 108-118 (QSADIAQGVDA) is flexible loop. Residues 176-178 (DSK), 242-243 (KF), aspartate 251, 257-258 (RK), alanine 274, and lysine 278 each bind ATP. Position 251 (aspartate 251) interacts with L-methionine. Residue lysine 282 participates in L-methionine binding.

This sequence belongs to the AdoMet synthase family. As to quaternary structure, homotetramer; dimer of dimers. Mg(2+) is required as a cofactor. K(+) serves as cofactor.

It localises to the cytoplasm. It catalyses the reaction L-methionine + ATP + H2O = S-adenosyl-L-methionine + phosphate + diphosphate. It participates in amino-acid biosynthesis; S-adenosyl-L-methionine biosynthesis; S-adenosyl-L-methionine from L-methionine: step 1/1. Functionally, catalyzes the formation of S-adenosylmethionine (AdoMet) from methionine and ATP. The overall synthetic reaction is composed of two sequential steps, AdoMet formation and the subsequent tripolyphosphate hydrolysis which occurs prior to release of AdoMet from the enzyme. This is S-adenosylmethionine synthase from Bradyrhizobium diazoefficiens (strain JCM 10833 / BCRC 13528 / IAM 13628 / NBRC 14792 / USDA 110).